The chain runs to 299 residues: Glycine--tRNA ligase alpha subunit (299 aa).

It belongs to the class-II aminoacyl-tRNA synthetase family. In terms of assembly, tetramer of two alpha and two beta subunits.

The protein localises to the cytoplasm. The enzyme catalyses tRNA(Gly) + glycine + ATP = glycyl-tRNA(Gly) + AMP + diphosphate. This Laribacter hongkongensis (strain HLHK9) protein is Glycine--tRNA ligase alpha subunit.